The primary structure comprises 263 residues: Probable ribosomal RNA small subunit methyltransferase A (263 aa).

The S-adenosyl-L-methionine site is built by leucine 12, glycine 37, glutamate 58, aspartate 83, and asparagine 100.

The protein belongs to the class I-like SAM-binding methyltransferase superfamily. rRNA adenine N(6)-methyltransferase family. RsmA subfamily.

Its subcellular location is the cytoplasm. In terms of biological role, specifically dimethylates two adjacent adenosines in the loop of a conserved hairpin near the 3'-end of 16S rRNA in the 30S particle. May play a critical role in biogenesis of 30S subunits. The polypeptide is Probable ribosomal RNA small subunit methyltransferase A (Methanococcus maripaludis (strain C5 / ATCC BAA-1333)).